An 833-amino-acid chain; its full sequence is 3-hydroxy-3-methylglutaryl-coenzyme A reductase (833 aa).

The next 4 helical transmembrane spans lie at 10-32 (FCAR…AASV), 91-117 (YLLI…LFWS), 160-180 (LALL…LVGV), and 301-321 (SADY…FVFF). Residues 322 to 419 (EEQRNWVIDM…EEVVMLVEQS (98 aa)) are linker. The disordered stretch occupies residues 347–374 (KPKFSVGDDSNSEVSTQTEGVLEDEWPT). A compositionally biased stretch (polar residues) spans 354-365 (DDSNSEVSTQTE). A catalytic region spans residues 420-833 (HIPLHRLEAV…ENITLKVPTL (414 aa)). Residues Glu-504 and Lys-635 each act as charge relay system in the active site. Asn-680 is a glycosylation site (N-linked (GlcNAc...) asparagine). The active-site Charge relay system is the Asp-711. N-linked (GlcNAc...) asparagine glycosylation is found at Asn-715 and Asn-720. His-809 (proton donor) is an active-site residue. N-linked (GlcNAc...) asparagine glycosylation is found at Asn-813 and Asn-825.

The protein belongs to the HMG-CoA reductase family.

Its subcellular location is the endoplasmic reticulum membrane. It carries out the reaction (R)-mevalonate + 2 NADP(+) + CoA = (3S)-3-hydroxy-3-methylglutaryl-CoA + 2 NADPH + 2 H(+). It participates in metabolic intermediate biosynthesis; (R)-mevalonate biosynthesis; (R)-mevalonate from acetyl-CoA: step 3/3. With respect to regulation, the activity of HMG-CoA-reductase is suppressed by exogenous mevalonate. Synthesis of mevalonate for the production of non-sterol isoprenoids, which are essential for growth differentiation. The sequence is that of 3-hydroxy-3-methylglutaryl-coenzyme A reductase (HMGR) from Agrotis ipsilon (Black cutworm moth).